The primary structure comprises 465 residues: Dihydrolipoyl dehydrogenase (465 aa).

FAD is bound by residues Glu-34–Cys-42, Lys-51, and Gly-114. A disulfide bond links Cys-42 and Cys-47. NAD(+)-binding positions include Gly-180–Ile-184, Glu-203, Val-237, and Ser-264–Arg-267. Residues Asp-307 and Ala-315 each contribute to the FAD site. Catalysis depends on His-439, which acts as the Proton acceptor.

The protein belongs to the class-I pyridine nucleotide-disulfide oxidoreductase family. It depends on FAD as a cofactor.

Its subcellular location is the cytoplasm. The catalysed reaction is N(6)-[(R)-dihydrolipoyl]-L-lysyl-[protein] + NAD(+) = N(6)-[(R)-lipoyl]-L-lysyl-[protein] + NADH + H(+). Functionally, the branched-chain alpha-keto dehydrogenase complex catalyzes the overall conversion of alpha-keto acids to acyl-CoA and CO(2). It contains multiple copies of 3 enzymatic components: branched-chain alpha-keto acid decarboxylase (E1), lipoamide acyltransferase (E2) and lipoamide dehydrogenase (E3). The sequence is that of Dihydrolipoyl dehydrogenase (lpdA) from Chlamydia muridarum (strain MoPn / Nigg).